Consider the following 881-residue polypeptide: MAYRKRGARRETNLKQDERMQEKEDSKNINNDSPKSQLSEKVLSKKEEIITDNQEEVKISDEVKKSNKEESKQLLEVLKTKEEHQKEVQYEILQKTIPTFEPKESILKKLEDIKPEQAKKQTKLFRIFEPKQLPIYRANGERELRNRWYWKLKRDTLPDGDYDVREYFLNLYDQVLMEMPDYLLLKDMAVENKNSRDAGKVVDSETAAICDAIFQDEEPKAVRRFIAEMRQRVQADRNVVNYPSILHPIDHAFNEYFLQHQLVEPLNNVYIFNYIPERIRNDVNYILNMDRNLPSTARYIRPNLLQDRLNLHDNFESLWDTITTSNYILARSVVPDLKELVSTEAQIQKMSQDLQLEALTIQSETQFLTGINSQAANDCFKTLIAAMLSQRTMSLDFVTTNYMSLISGMWLLTVIPNDMFIRESLVACQLAIINTIVYPAFGMQRMHYRNGDPQTPFQIAEQQIQNFQVANWLHFVNYNQFRQVVIDGVLNQVLNDNIRNGHVVNQLMEALMQLSRQQFPTMPVDYKRSIQRGIFLLSNRLGQLVDLTRLLSYINETLMACITMNMQHVQTLTTEKLQLTSVTSLCMLIGNATVIPSPQTLFHYYNVNVNFHSNYNERINDAVAIITAANRLNLYQKKMKSIVEDFLKRLQIFDVARVPDDQMYRLRDRLRLLPVEIRRLDIFNLIAMNMEQIERASDKIAQGVIIAYRDMQLERDEMYGYVNIARNLDGFQQINLEELMRSGDYAQITNMLLNNQPVALVGALPFITDSSVISLIAKLDATVFAQIVKLRKVDTLKPILYKINSDSNDFYLVANYDWIPTSTTKVYKQVPQQFDFRASMHMLTSNLTFTVYSDLLAFVSADTVEPINAVAFDNMRIMNEL.

The tract at residues Met-1–Lys-46 is disordered. Positions Met-1 to Glu-82 are 5-fold hub; involved in the encapsidation of VP1 and VP3. The span at Arg-9–Lys-27 shows a compositional bias: basic and acidic residues. Over residues Asn-28–Ser-39 the composition is skewed to polar residues. Hydrophobic stretches follow at residues Leu-395–Ile-415 and Glu-423–Met-443.

This sequence belongs to the rotavirus VP2 family. In terms of assembly, homodecamer; each decamer is made up of two conformers of VP2, called VP2A and VP2B. Interacts with a VP1-VP3 complex. Interacts with the intermediate capsid protein VP6. Interacts with NSP5. Interacts (via N-terminus) with NSP2. In terms of processing, sumoylated with SUMO1 and SUMO2. Sumoylation of viral proteins seems to have a positive role on viral replication.

It localises to the virion. Functionally, inner capsid protein that self-assembles to form an icosahedral capsid with a T=2 symmetry, which consists of 120 copies of VP2, with channels at each of its five-fold vertices. This capsid constitutes the innermost concentric layer of the viral mature particle. It encapsidates the polymerase VP1, the capping enzyme VP3 and the genomic dsRNA, thereby defining the core. The innermost VP2 capsid and the intermediate VP6 capsid remain intact following cell entry to protect the dsRNA from degradation and to prevent unfavorable antiviral responses in the host cell during all the replication cycle of the virus. Nascent transcripts are transcribed within the structural confines of this double-layered particle (DLP) and are extruded through the channels formed by VP2 N-termini. VP2 is required for the replicase activity of VP1 polymerase. Probably recruits a copy of a VP1-VP3 complex, potentially along with a segment of plus-strand RNA, as a decamer of VP2 assembles. May activate the autoinhibited VP1/RNA complex to coordinate packaging and genome replication. The chain is Inner capsid protein VP2 from Macaca mulatta (Rhesus macaque).